The following is a 560-amino-acid chain: Terminal uridylyltransferase Tailor (560 aa).

Residues 169 to 197 (EQHPKPNPNNQPVQPHPTHQTKQEKKQAQ) are disordered. Low complexity predominate over residues 176–188 (PNNQPVQPHPTHQ). Residues D278 and D280 each coordinate Mg(2+). Positions 455 to 522 (LRNFFAYFAK…VVQDPIQLNH (68 aa)) constitute a PAP-associated domain.

Mg(2+) serves as cofactor.

It is found in the cytoplasm. The catalysed reaction is RNA(n) + UTP = RNA(n)-3'-uridine ribonucleotide + diphosphate. Functionally, uridylyltransferase which mediates terminal uridylation of miRNAs, leading to their degradation. Has high specificity for splicing-derived miRNAs (mirtrons) and other miRNA substrates containing a 3'-G terminal nucleotide. Appears to be a major suppressor of mirtron biogenesis. This is Terminal uridylyltransferase Tailor from Drosophila melanogaster (Fruit fly).